The primary structure comprises 713 residues: Leucine-rich repeat-containing protein 4B (713 aa).

A signal peptide spans 1–35 (MARARGSPCPPLPPGRMSWPHGALLFLWLFSPPLG). Residues 36-576 (AGGGGVAVTS…DLDDVMKTTK (541 aa)) lie on the Extracellular side of the membrane. The region spanning 48 to 86 (GGGSPPATSCPVACSCSNQASRVICTRRDLAEVPASIPV) is the LRRNT domain. 9 LRR repeats span residues 87 to 108 (NTRY…TFKH), 111 to 132 (HLEI…AFNG), 135 to 156 (SLNT…AFEY), 159 to 180 (KLRE…AFNR), 183 to 205 (SLRR…AFEG), 208 to 229 (NLRY…TALV), 230 to 251 (RLEE…SFQG), 254 to 275 (SLRK…AFDD), and 278 to 299 (SLEE…LFTP). The N-linked (GlcNAc...) asparagine glycan is linked to N224. N-linked (GlcNAc...) asparagine glycosylation is found at N283, N333, N374, N400, N422, N425, N444, and N452. The region spanning 311-363 (NPWHCNCDVLWLSWWLKETVPSNTTCCARCHAPAGLKGRYIGELDQSHFTCYA) is the LRRCT domain. The 89-residue stretch at 364-452 (PVIVEPPTDL…GNTTASATLN (89 aa)) folds into the Ig-like C2-type domain. A disulfide bridge links C385 with C436. Positions 497–551 (TQPGEEALQPRGTEKEPPGPTTDGVWGGGRPGDAAGPASSSTTAPAPRSSRPTEK) are disordered. Positions 528 to 546 (GDAAGPASSSTTAPAPRSS) are enriched in low complexity. The helical transmembrane segment at 577–597 (IIIGCFVAITFMAAVMLVAFY) threads the bilayer. Residues 598–713 (KLRKQHQLHK…SKENVQETQI (116 aa)) are Cytoplasmic-facing. S693 carries the phosphoserine modification. Residues 694-713 (IHEPLLFKSGSKENVQETQI) are disordered. The span at 703 to 713 (GSKENVQETQI) shows a compositional bias: basic and acidic residues.

As to quaternary structure, interacts with PTPRF. Interacts with DLG4. Post-translationally, N-glycosylated. O-glycosylated; contains sialic acid.

It is found in the membrane. The protein resides in the presynaptic cell membrane. Synaptic adhesion protein. Regulates the formation of excitatory synapses. The trans-synaptic adhesion between LRRC4B and PTPRF regulates the formation of excitatory synapses in a bidirectional manner. The sequence is that of Leucine-rich repeat-containing protein 4B (LRRC4B) from Homo sapiens (Human).